Consider the following 267-residue polypeptide: MLSRILGVRNHSFRAFSTIGVCYNKSNTSPKKYLSPNEFASQKQVDEIEEQAYKQNLLNEEYKYDPKYLSENELNPISKRPIPLNVELLKYKPVQLPPTHGHEVAKIEFKGYDKDDLIRASEFAARAAFYLGIPCSKVQSLKTEKRLYTVIKSPFAQAKSKENFKRTTYGRKVYAYDATPEVVDLWLSFINKHAIEGVKYNALIHTRESLDFCEKLDALSADDMHMPDAYKGSDDPIANKVEELLKSDTFKKYFDEANIAESPKESK.

The transit peptide at 1–10 (MLSRILGVRN) directs the protein to the mitochondrion.

It belongs to the universal ribosomal protein uS10 family. In terms of assembly, part of the mitochondrial small ribosomal subunit.

The protein resides in the mitochondrion. In terms of biological role, involved in mitochondrial genome encoded proteins translation. Involved in the binding of tRNA to the ribosomes. The chain is Small ribosomal subunit protein uS10m (RSM10) from Debaryomyces hansenii (strain ATCC 36239 / CBS 767 / BCRC 21394 / JCM 1990 / NBRC 0083 / IGC 2968) (Yeast).